A 376-amino-acid chain; its full sequence is Putative glutamate--cysteine ligase 2 (376 aa).

It belongs to the glutamate--cysteine ligase type 2 family. YbdK subfamily.

It catalyses the reaction L-cysteine + L-glutamate + ATP = gamma-L-glutamyl-L-cysteine + ADP + phosphate + H(+). Its function is as follows. ATP-dependent carboxylate-amine ligase which exhibits weak glutamate--cysteine ligase activity. This chain is Putative glutamate--cysteine ligase 2, found in Mycobacterium bovis (strain ATCC BAA-935 / AF2122/97).